Reading from the N-terminus, the 154-residue chain is Ribosome maturation factor RimP (154 aa).

Belongs to the RimP family.

It localises to the cytoplasm. Its function is as follows. Required for maturation of 30S ribosomal subunits. This chain is Ribosome maturation factor RimP, found in Salmonella gallinarum (strain 287/91 / NCTC 13346).